The primary structure comprises 493 residues: Probable malate:quinone oxidoreductase (493 aa).

Belongs to the MQO family. The cofactor is FAD.

It carries out the reaction (S)-malate + a quinone = a quinol + oxaloacetate. Its pathway is carbohydrate metabolism; tricarboxylic acid cycle; oxaloacetate from (S)-malate (quinone route): step 1/1. This Lysinibacillus sphaericus (strain C3-41) protein is Probable malate:quinone oxidoreductase.